A 541-amino-acid polypeptide reads, in one-letter code: CTP synthase (541 aa).

The segment at 1–265 is amidoligase domain; sequence MTRFIFITGG…DAVVCRHFGL (265 aa). Serine 13 is a CTP binding site. Residue serine 13 coordinates UTP. 14–19 provides a ligand contact to ATP; the sequence is SLGKGL. Tyrosine 54 contacts L-glutamine. Aspartate 71 serves as a coordination point for ATP. Residues aspartate 71 and glutamate 139 each contribute to the Mg(2+) site. CTP-binding positions include 146–148, 186–191, and lysine 222; these read DIE and KTKPTQ. UTP is bound by residues 186-191 and lysine 222; that span reads KTKPTQ. Residues 290 to 540 enclose the Glutamine amidotransferase type-1 domain; that stretch reads TIAIVGKYIS…IAAAVRQSRL (251 aa). Glycine 352 is an L-glutamine binding site. Cysteine 379 acts as the Nucleophile; for glutamine hydrolysis in catalysis. L-glutamine-binding positions include 380-383, glutamate 403, and arginine 468; that span reads FGMQ. Active-site residues include histidine 513 and glutamate 515.

Belongs to the CTP synthase family. As to quaternary structure, homotetramer.

It catalyses the reaction UTP + L-glutamine + ATP + H2O = CTP + L-glutamate + ADP + phosphate + 2 H(+). It carries out the reaction L-glutamine + H2O = L-glutamate + NH4(+). The catalysed reaction is UTP + NH4(+) + ATP = CTP + ADP + phosphate + 2 H(+). Its pathway is pyrimidine metabolism; CTP biosynthesis via de novo pathway; CTP from UDP: step 2/2. Allosterically activated by GTP, when glutamine is the substrate; GTP has no effect on the reaction when ammonia is the substrate. The allosteric effector GTP functions by stabilizing the protein conformation that binds the tetrahedral intermediate(s) formed during glutamine hydrolysis. Inhibited by the product CTP, via allosteric rather than competitive inhibition. Catalyzes the ATP-dependent amination of UTP to CTP with either L-glutamine or ammonia as the source of nitrogen. Regulates intracellular CTP levels through interactions with the four ribonucleotide triphosphates. In Paramagnetospirillum magneticum (strain ATCC 700264 / AMB-1) (Magnetospirillum magneticum), this protein is CTP synthase.